Consider the following 396-residue polypeptide: MLSEVLLVSAPGKVILHGEHAVVHGKVALAVSLNLRTFLRLQPHSNGKVDLSLPNIGIKRAWDVARLQSLDTSFLEQGDVTTPTSEQVEKLKEVAGLPDDCAVTERLAVLAFLYLYLSICRKQRALPSLDIVVWSELPPGAGLGSSAAYSVCLAAALLTVCEEIPNPLKDGDCVNRWTKEDLELINKWAFQGERMIHGNPSGVDNAVSTWGGALRYHQGKISSLKRSPALQILLTNTKVPRNTRALVAGVRNRLLKFPEIVAPLLTSIDAISLECERVLGEMGEAPAPEQYLVLEELIDMNQHHLNALGVGHASLDQLCQVTRARGLHSKLTGAGGGGCGITLLKPGLEQPEVEATKQALTSCGFDCLETSIGAPGVSIHSATSLDSRVQQALDGL.

ATP is bound by residues Lys13, Asn55, Ser135, and 140-146 (GAGLGSS). Ser146 serves as the catalytic Proton donor. 2 residues coordinate Mg(2+): Ser146 and Glu193. The active-site Proton acceptor is Asp204.

The protein belongs to the GHMP kinase family. Mevalonate kinase subfamily. Homodimer. Mg(2+) serves as cofactor.

The protein resides in the cytoplasm. The protein localises to the peroxisome. The enzyme catalyses (R)-mevalonate + ATP = (R)-5-phosphomevalonate + ADP + H(+). It functions in the pathway isoprenoid biosynthesis; isopentenyl diphosphate biosynthesis via mevalonate pathway; isopentenyl diphosphate from (R)-mevalonate: step 1/3. With respect to regulation, farnesyl pyrophosphate and geranyl pyrophosphate inhibit mevalonate kinase activity by binding competitively at the ATP-binding sites. Functionally, catalyzes the phosphorylation of mevalonate to mevalonate 5-phosphate, a key step in isoprenoid and cholesterol biosynthesis. This chain is Mevalonate kinase, found in Homo sapiens (Human).